A 387-amino-acid chain; its full sequence is Protein-glutamate methylesterase/protein-glutamine glutaminase 1 (387 aa).

The region spanning 18-136 (RVMVVDDSAV…EISGGTDFRH (119 aa)) is the Response regulatory domain. 4-aspartylphosphate is present on Asp-69. The 198-residue stretch at 190-387 (PAAEERPDII…AYVLRSANKR (198 aa)) folds into the CheB-type methylesterase domain. Residues Ser-204, His-233, and Asp-329 contribute to the active site.

The protein belongs to the CheB family. Phosphorylated by CheA. Phosphorylation of the N-terminal regulatory domain activates the methylesterase activity.

It localises to the cytoplasm. The enzyme catalyses [protein]-L-glutamate 5-O-methyl ester + H2O = L-glutamyl-[protein] + methanol + H(+). It catalyses the reaction L-glutaminyl-[protein] + H2O = L-glutamyl-[protein] + NH4(+). Involved in chemotaxis. Part of a chemotaxis signal transduction system that modulates chemotaxis in response to various stimuli. Catalyzes the demethylation of specific methylglutamate residues introduced into the chemoreceptors (methyl-accepting chemotaxis proteins or MCP) by CheR. Also mediates the irreversible deamidation of specific glutamine residues to glutamic acid. This Rhodospirillum rubrum (strain ATCC 11170 / ATH 1.1.1 / DSM 467 / LMG 4362 / NCIMB 8255 / S1) protein is Protein-glutamate methylesterase/protein-glutamine glutaminase 1.